The primary structure comprises 199 residues: Heparin-binding hemagglutinin (199 aa).

Residues 162-180 (KAAPAKKAAPAKKAAPAKK) are compositionally biased toward low complexity. Positions 162 to 199 (KAAPAKKAAPAKKAAPAKKAAAKKAPAKKAAAKKVTQK) are disordered. The segment covering 181 to 199 (AAAKKAPAKKAAAKKVTQK) has biased composition (basic residues).

To M.leprae HbhA. In terms of processing, glycosylated. Glycosylation may protect the protein from proteolytic degradation and be important for hemagglutination. It suggests that the carbohydrate moiety may be located within the C-terminal domain of HbhA.

Its subcellular location is the cell surface. Required for extrapulmonary dissemination. Mediates adherence to epithelial cells by binding to sulfated glycoconjugates present at the surface of these cells. The chain is Heparin-binding hemagglutinin (hbhA) from Mycobacterium tuberculosis (strain CDC 1551 / Oshkosh).